We begin with the raw amino-acid sequence, 114 residues long: Large ribosomal subunit protein eL31 (114 aa).

The protein belongs to the eukaryotic ribosomal protein eL31 family.

In Eremothecium gossypii (strain ATCC 10895 / CBS 109.51 / FGSC 9923 / NRRL Y-1056) (Yeast), this protein is Large ribosomal subunit protein eL31 (RPL31).